We begin with the raw amino-acid sequence, 680 residues long: TBC1 domain family member 23 (680 aa).

Residues 40-221 (DLSPPQRAKL…ALWDVYLQQA (182 aa)) form the Rab-GAP TBC domain. The region spanning 330–442 (EGVRFFVVDC…LQQHLADINV (113 aa)) is the Rhodanese domain.

It is found in the golgi apparatus. It localises to the trans-Golgi network. The protein localises to the cytoplasmic vesicle. Putative Rab GTPase-activating protein which plays a role in vesicular trafficking. Involved in endosome-to-Golgi trafficking. Acts as a bridging protein by binding simultaneously to golgins, located at the trans-Golgi, and to the WASH complex, located on endosome-derived vesicles. Plays a role in brain development. May act as a general inhibitor of innate immunity signaling. The sequence is that of TBC1 domain family member 23 (tbc1d23) from Danio rerio (Zebrafish).